We begin with the raw amino-acid sequence, 269 residues long: Glutamate 5-kinase (269 aa).

Lys-14 lines the ATP pocket. Substrate contacts are provided by Ser-54, Asp-141, and Asn-157. ATP contacts are provided by residues 177–178 (SD) and 219–225 (TGGMVTK).

Belongs to the glutamate 5-kinase family.

It localises to the cytoplasm. It catalyses the reaction L-glutamate + ATP = L-glutamyl 5-phosphate + ADP. It functions in the pathway amino-acid biosynthesis; L-proline biosynthesis; L-glutamate 5-semialdehyde from L-glutamate: step 1/2. Catalyzes the transfer of a phosphate group to glutamate to form L-glutamate 5-phosphate. The protein is Glutamate 5-kinase of Clostridium perfringens (strain 13 / Type A).